The sequence spans 62 residues: MVRLYRENRSKFYRVKCPDCENEQIIFEKASTVVDCVVCGHVLAEPRGGRAALKAEILAELE.

Residues Cys17, Cys20, Cys36, and Cys39 each coordinate Zn(2+). The C4-type zinc finger occupies 17-39; that stretch reads CPDCENEQIIFEKASTVVDCVVC.

It belongs to the eukaryotic ribosomal protein eS27 family. Part of the 30S ribosomal subunit. Zn(2+) serves as cofactor.

This chain is Small ribosomal subunit protein eS27, found in Methanosphaerula palustris (strain ATCC BAA-1556 / DSM 19958 / E1-9c).